The sequence spans 469 residues: Protein RUFY3 (469 aa).

Residues Thr-5 and Thr-12 each carry the phosphothreonine modification. A phosphoserine mark is found at Ser-34 and Ser-49. A Phosphothreonine modification is found at Thr-51. One can recognise an RUN domain in the interval 95 to 227 (DSDYAPLQQF…IDANFCMKGE (133 aa)). Coiled-coil stretches lie at residues 271-362 (NRHL…VEKE) and 422-463 (KSEL…AANK).

As to quaternary structure, interacts with PAK1. Interacts (via C-terminus) with Ras-related Rab-5 proteins. Interacts (via C-terminus) with Ras-related Rap-2 proteins. Interacts with PIK3CA and PIK3R1. Interacts (via N-terminus) with FSCN1; this interaction induces neuron axon development. Interacts with DBN1. Interacts (via the second coiled coil) with GTP-, but not GDP-bound ARL8A and ARL8B. Interacts with dynactin/DCTN1 and the dynein intermediate chain DYNC1I1/2. Directly interacts with DYNC1LI1. Post-translationally, phosphorylated by PAK1. Isoform 1 is partially phosphorylated. In terms of tissue distribution, overexpressed in gastric cancer cells and tissues (at protein level).

The protein localises to the cytoplasm. It localises to the endomembrane system. Its subcellular location is the cell projection. It is found in the invadopodium. The protein resides in the perikaryon. The protein localises to the growth cone. It localises to the filopodium. Its subcellular location is the lamellipodium. It is found in the lysosome. Its function is as follows. ARL8 effector that promotes the coupling of endolysosomes to dynein-dynactin for retrograde transport along microtubules. Acts by binding both GTP-bound ARL8 and dynein-dynactin. In nonneuronal cells, promotes concentration of endolysosomes in the juxtanuclear area. In hippocampal neurons, drives retrograde transport of endolysosomes from the axon to the soma. Plays a role in the generation of neuronal polarity formation and axon growth. Implicated in the formation of a single axon by developing neurons. May inhibit the formation of additional axons by inhibition of PI3K in minor neuronal processes. Plays a role in the formation of F-actin-enriched protrusive structures at the cell periphery. Plays a role in cytoskeletal organization by regulating the subcellular localization of FSCN1 and DBN1 at axonal growth cones. The protein is Protein RUFY3 of Homo sapiens (Human).